Consider the following 432-residue polypeptide: Glutamyl-tRNA reductase (432 aa).

Substrate is bound by residues 49 to 52, serine 101, 106 to 108, and glutamine 112; these read TCNR and ESQ. The active-site Nucleophile is cysteine 50. 181–186 is a binding site for NADP(+); that stretch reads GTGETI.

It belongs to the glutamyl-tRNA reductase family. Homodimer.

The catalysed reaction is (S)-4-amino-5-oxopentanoate + tRNA(Glu) + NADP(+) = L-glutamyl-tRNA(Glu) + NADPH + H(+). Its pathway is porphyrin-containing compound metabolism; protoporphyrin-IX biosynthesis; 5-aminolevulinate from L-glutamyl-tRNA(Glu): step 1/2. Functionally, catalyzes the NADPH-dependent reduction of glutamyl-tRNA(Glu) to glutamate 1-semialdehyde (GSA). The sequence is that of Glutamyl-tRNA reductase from Xylella fastidiosa (strain M12).